Consider the following 224-residue polypeptide: MYPKINTIDTYISLRLFEVKPKYAGYSSVDARNKSFAIHDIKNYEKFSNAGLFYTSPTEITCYCCGMKFCNWLYEKHPLQVHGFWSRNCGFMRATLGIIGLKKMIDSYNDYFTHEVSVKHKNRVYTHKRLEDMGFSKCFMRFILANAFMPPYRKYIHKIILNERYFTFKFVAYLLSFHKVNLDNQTTYCMTCGIEQINKDENFCSACKTLNYKYYKMLNFSIKL.

A BIR repeat occupies 29 to 92; that stretch reads VDARNKSFAI…GFWSRNCGFM (64 aa). Zn(2+) contacts are provided by C62, C65, H82, and C89. The C4-type zinc finger occupies 189–207; sequence CMTCGIEQINKDENFCSAC.

Belongs to the asfivirus IAP family. As to quaternary structure, interacts with subunit p17 of host CASP3.

The protein resides in the host cytoplasm. Its subcellular location is the virion. Prevents apoptosis of host cell by inhibiting caspase-3/CASP3 activation to promote the viral replication. Also induces the activation of host NF-kappaB. The sequence is that of Inhibitor of apoptosis protein from Ornithodoros (relapsing fever ticks).